The sequence spans 427 residues: Serine--tRNA ligase (427 aa).

231 to 233 (TAE) is an L-serine binding site. 262–264 (RSE) is an ATP binding site. E285 contacts L-serine. 349–352 (EISS) provides a ligand contact to ATP. An L-serine-binding site is contributed by S385.

It belongs to the class-II aminoacyl-tRNA synthetase family. Type-1 seryl-tRNA synthetase subfamily. As to quaternary structure, homodimer. The tRNA molecule binds across the dimer.

The protein localises to the cytoplasm. It carries out the reaction tRNA(Ser) + L-serine + ATP = L-seryl-tRNA(Ser) + AMP + diphosphate + H(+). The catalysed reaction is tRNA(Sec) + L-serine + ATP = L-seryl-tRNA(Sec) + AMP + diphosphate + H(+). The protein operates within aminoacyl-tRNA biosynthesis; selenocysteinyl-tRNA(Sec) biosynthesis; L-seryl-tRNA(Sec) from L-serine and tRNA(Sec): step 1/1. Functionally, catalyzes the attachment of serine to tRNA(Ser). Is also able to aminoacylate tRNA(Sec) with serine, to form the misacylated tRNA L-seryl-tRNA(Sec), which will be further converted into selenocysteinyl-tRNA(Sec). This Rhizobium rhizogenes (strain K84 / ATCC BAA-868) (Agrobacterium radiobacter) protein is Serine--tRNA ligase.